We begin with the raw amino-acid sequence, 784 residues long: Melanoma-associated antigen D1 (784 aa).

The tract at residues 41–67 (PTNQATAAASGPNASPQSSQPPSANEV) is disordered. Over residues 47–65 (AAASGPNASPQSSQPPSAN) the composition is skewed to low complexity. Position 97 is a phosphotyrosine (tyrosine 97). Polar residues-rich tracts occupy residues 195-214 (PTAE…TSQA), 232-246 (AQTS…NLES), 259-269 (NNLNVEESSSG), and 306-320 (LAWQ…QPAR). The tract at residues 195 to 339 (PTAETQTQNI…PARQTPPAWQ (145 aa)) is disordered. 19 consecutive repeat copies span residues 302 to 307 (WQTPLA), 308 to 313 (WQNPSG), 314 to 319 (WQNQPA), 338 to 343 (WQNPVA), 344 to 349 (WQNPVI), 350 to 355 (WPNPVI), 356 to 361 (WQNPVI), 362 to 367 (WPNPIV), 368 to 373 (WPGPVV), 374 to 379 (WPNPLA), 380 to 385 (WQNPPG), 386 to 391 (WQTPPG), 392 to 397 (WQTPPG), 398 to 403 (WQGPPD), 404 to 409 (WQGPPD), 410 to 415 (WPLPPD), 416 to 421 (WPLPPD), 422 to 427 (WPLPTD), and 428 to 433 (WPLPPD). Positions 302–450 (WQTPLAWQNP…VPPDWQNLRP (149 aa)) are 22 X 6 AA tandem repeats of W-[PQ]-X-P-X-X. A disordered region spans residues 379–418 (AWQNPPGWQTPPGWQTPPGWQGPPDWQGPPDWPLPPDWPL). The span at 383 to 403 (PPGWQTPPGWQTPPGWQGPPD) shows a compositional bias: low complexity. Positions 404–418 (WQGPPDWPLPPDWPL) are enriched in pro residues. One copy of the 20; approximate repeat lies at 434–438 (WIPTD). A run of 2 repeats spans residues 439–444 (WPVPPD) and 445–450 (WQNLRP). The tract at residues 441–471 (VPPDWQNLRPSPNLRPSPNSRASQNLGASQP) is disordered. Residues 447–461 (NLRPSPNLRPSPNSR) are compositionally biased toward low complexity. Positions 477 to 675 (LQERANKLVK…RDWTAQFMEA (199 aa)) constitute an MAGE domain.

In terms of assembly, interacts with DLX5, DLX7 and MSX2 and forms homomultimers. Interacts with UNC5A. Interacts with TRIM28 and PJA1. Interacts with NGFR/p75NTR and RORA.

It localises to the cytoplasm. It is found in the cell membrane. Its subcellular location is the nucleus. Its function is as follows. Involved in the apoptotic response after nerve growth factor (NGF) binding in neuronal cells. Inhibits cell cycle progression, and facilitates NGFR-mediated apoptosis. May act as a regulator of the function of DLX family members. May enhance ubiquitin ligase activity of RING-type zinc finger-containing E3 ubiquitin-protein ligases. Proposed to act through recruitment and/or stabilization of the Ubl-conjugating enzyme (E2) at the E3:substrate complex. Plays a role in the circadian rhythm regulation. May act as RORA co-regulator, modulating the expression of core clock genes such as BMAL1 and NFIL3, induced, or NR1D1, repressed. This is Melanoma-associated antigen D1 (MAGED1) from Sus scrofa (Pig).